A 284-amino-acid polypeptide reads, in one-letter code: MSQNEPNPLVIFSTLAAIILAAVAVYVVKLNKKNGPVLKPDVFQKFPLIEKTRLSHNTCIYRFGLPKSTDRLGLPIGQHISIGATINGKEVVRSYTPISRDDELGYFDLLIKTYEQGNISRHVDSKSVGDHIEVRGPKGFFTYTPNMVEHLGMIAGGTGIAPMYQVLTAILTNPDDKTKISLVYANVTEEDILLRAELDLFAKEHPDRFKVHYVLNNAPENWNGSVGFVTPEIMEKHLPNKDQDGYLLLCGPPPMISAMKKNAVTLGYPKARPVSKLGDKVFVF.

The helical transmembrane segment at Pro-8–Val-28 threads the bilayer. The region spanning Asp-41–Thr-144 is the FAD-binding FR-type domain. FAD contacts are provided by residues Asp-124–Gly-139 and His-150–Leu-182.

The protein belongs to the flavoprotein pyridine nucleotide cytochrome reductase family. As to quaternary structure, monomer. Component of the 2-(3-amino-3-carboxypropyl)histidine synthase complex composed of DPH1, DPH2, DPH3 and a NADH-dependent reductase, predominantly CBR1. The cofactor is FAD.

It is found in the mitochondrion outer membrane. It catalyses the reaction 2 Fe(III)-[cytochrome b5] + NADH = 2 Fe(II)-[cytochrome b5] + NAD(+) + H(+). It carries out the reaction 2 Fe(3+)-[Dph3] + NADH = 2 Fe(2+)-[Dph3] + NAD(+) + H(+). The protein operates within protein modification; peptidyl-diphthamide biosynthesis. Its function is as follows. NADH-dependent reductase for DPH3 and cytochrome b5. Required for the first step of diphthamide biosynthesis, a post-translational modification of histidine which occurs in elongation factor 2. DPH1 and DPH2 transfer a 3-amino-3-carboxypropyl (ACP) group from S-adenosyl-L-methionine (SAM) to a histidine residue, the reaction is assisted by a reduction system comprising DPH3 and a NADH-dependent reductase, predominantly CBR1. By reducing DPH3, also involved in the formation of the tRNA wobble base modification mcm5s 2U (5-methoxycarbonylmethyl-2-thiouridine), mediated by the elongator complex. The cytochrome b5/NADH cytochrome b5 reductase electron transfer system supports the catalytic activity of several sterol biosynthetic enzymes. The protein is NADH-cytochrome b5 reductase 1 (CBR1) of Meyerozyma guilliermondii (strain ATCC 6260 / CBS 566 / DSM 6381 / JCM 1539 / NBRC 10279 / NRRL Y-324) (Yeast).